A 1630-amino-acid chain; its full sequence is Transient receptor potential cation channel subfamily M member 1 (1630 aa).

Disordered regions lie at residues 1 to 25, 65 to 92, 453 to 492, 620 to 643, and 824 to 858; these read MGSMRKMSSSFKRGSIKSSTSGSQK, PLPSVTPSSTAEDTKQGDAQSGKWSVSK, APPVDTKVAEKEKKPPTATTKGRGKGKGKKKGKVKEEVEE, LGMEDDEPPAKGKKKKKKKKEEEI, and SKENEDGKEKEEENVDANADAGSRKGDEENEHKKQ. The Cytoplasmic portion of the chain corresponds to 1 to 877; that stretch reads MGSMRKMSSS…CEFYNAPIVK (877 aa). A compositionally biased stretch (low complexity) spans 8–25; it reads SSSFKRGSIKSSTSGSQK. Polar residues predominate over residues 69-92; that stretch reads VTPSSTAEDTKQGDAQSGKWSVSK. Positions 474–485 are enriched in basic residues; it reads GRGKGKGKKKGK. 2 stretches are compositionally biased toward basic and acidic residues: residues 825-834 and 845-855; these read KENEDGKEKE and GSRKGDEENEH. Residues 878-898 form a helical membrane-spanning segment; that stretch reads FWFYTISYLGYLLLFNYVILV. Residues 899 to 944 are Extracellular-facing; the sequence is RMDGWPSPQEWIVISYIVSLALEKIREILMSEPGKLSQKIKVWLQE. A helical membrane pass occupies residues 945-965; it reads YWNITDLVAISMFMVGAILRL. At 966 to 975 the chain is on the cytoplasmic side; the sequence is QNQPYMGYGR. The chain crosses the membrane as a helical span at residues 976-996; sequence VIYCVDIILWYIRVLDIFGVN. The Extracellular segment spans residues 997–1008; it reads KYLGPYVMMIGK. A helical transmembrane segment spans residues 1009-1029; it reads MMIDMLYFVVIMLVVLMSFGV. The Cytoplasmic portion of the chain corresponds to 1030–1107; it reads ARQAILHPEE…CIPGAWLTPA (78 aa). A helical transmembrane segment spans residues 1108 to 1128; it reads LMACYLLVANILLVNLLIAVF. N-linked (GlcNAc...) asparagine glycosylation occurs at N1129. Residues 1129–1158 are Extracellular-facing; the sequence is NNTFFEVKSISNQVWKFQRYQLIMTFHDRP. Residues 1159–1179 traverse the membrane as a helical segment; that stretch reads VLPPPMIILSHIYIIVMRLSG. Topologically, residues 1180-1630 are cytoplasmic; it reads RCRKKREGDQ…QEKGNPETEC (451 aa). Positions 1235–1255 form a coiled coil; it reads IRVTSERVENMSMRLEEINER. 2 disordered regions span residues 1362–1414 and 1575–1630; these read EDVK…AGEL and CLRS…ETEC.

The protein belongs to the transient receptor (TC 1.A.4) family. LTrpC subfamily. TRPM1 sub-subfamily. In terms of assembly, interacts with TRPM3; the interaction results in the formation of a heteromultimeric cation channel complex that are functionally different from the homomeric channels. Interacts with GPR179. Associates with both guanine nucleotide-binding proteins G(o) and beta-gamma G protein dimer; implicated in directly regulating TRPM1 channel open-state.

Its subcellular location is the cell membrane. It localises to the endoplasmic reticulum membrane. The protein resides in the cell projection. The protein localises to the axon. The enzyme catalyses Ca(2+)(in) = Ca(2+)(out). It catalyses the reaction Mg(2+)(in) = Mg(2+)(out). It carries out the reaction Mn(2+)(in) = Mn(2+)(out). The catalysed reaction is Ni(2+)(in) = Ni(2+)(out). Inhibited by extracellular zinc ions. Inhibited by intracellular Mg(2+). Activated by the neuroactive steroid pregnenolone sulfate. Negatively regulated by activation of GRM6 receptors in the ON-bipolar cells. Its function is as follows. Constitutively open nonselective divalent cation-conducting channels which mediate the influx of Ca(2+), Mg(2+), Mn(2+), Ba(2+), and Ni(2+) into the cytoplasm, leading to membrane depolarization. Impermeable to zinc ions. In addition, forms heteromultimeric ion channels with TRPM3 which are permeable for calcium and zinc ions. Plays an essential role for the depolarizing photoresponse of retinal ON bipolar cells. In the dark, tonic release of glutamate activates the G-protein coupled receptor for glutamate GRM6, its activation induces the release of G(o) protein and the beta-gamma G protein dimer. Both subunits can interact and inactivate the TRPM1 channel. A light onset, induces decrease in glutamate release and deactivation of GRM6 leading to channel opening and membrane depolarization. May play a role in metastasis suppression. The protein is Transient receptor potential cation channel subfamily M member 1 of Rattus norvegicus (Rat).